We begin with the raw amino-acid sequence, 238 residues long: 1-(5-phosphoribosyl)-5-[(5-phosphoribosylamino)methylideneamino] imidazole-4-carboxamide isomerase (238 aa).

D8 (proton acceptor) is an active-site residue. The Proton donor role is filled by D130.

It belongs to the HisA/HisF family.

It localises to the cytoplasm. The enzyme catalyses 1-(5-phospho-beta-D-ribosyl)-5-[(5-phospho-beta-D-ribosylamino)methylideneamino]imidazole-4-carboxamide = 5-[(5-phospho-1-deoxy-D-ribulos-1-ylimino)methylamino]-1-(5-phospho-beta-D-ribosyl)imidazole-4-carboxamide. The protein operates within amino-acid biosynthesis; L-histidine biosynthesis; L-histidine from 5-phospho-alpha-D-ribose 1-diphosphate: step 4/9. In Methanococcus maripaludis (strain C7 / ATCC BAA-1331), this protein is 1-(5-phosphoribosyl)-5-[(5-phosphoribosylamino)methylideneamino] imidazole-4-carboxamide isomerase.